Reading from the N-terminus, the 276-residue chain is S-adenosylmethionine decarboxylase proenzyme (276 aa).

Ser124 functions as the Schiff-base intermediate with substrate; via pyruvic acid in the catalytic mechanism. Position 124 is a pyruvic acid (Ser); by autocatalysis (Ser124). The active-site Proton acceptor; for processing activity is the His129. Cys152 serves as the catalytic Proton donor; for catalytic activity.

This sequence belongs to the prokaryotic AdoMetDC family. Type 2 subfamily. In terms of assembly, heterooctamer of four alpha and four beta chains arranged as a tetramer of alpha/beta heterodimers. Pyruvate serves as cofactor. In terms of processing, is synthesized initially as an inactive proenzyme. Formation of the active enzyme involves a self-maturation process in which the active site pyruvoyl group is generated from an internal serine residue via an autocatalytic post-translational modification. Two non-identical subunits are generated from the proenzyme in this reaction, and the pyruvate is formed at the N-terminus of the alpha chain, which is derived from the carboxyl end of the proenzyme. The post-translation cleavage follows an unusual pathway, termed non-hydrolytic serinolysis, in which the side chain hydroxyl group of the serine supplies its oxygen atom to form the C-terminus of the beta chain, while the remainder of the serine residue undergoes an oxidative deamination to produce ammonia and the pyruvoyl group blocking the N-terminus of the alpha chain.

The catalysed reaction is S-adenosyl-L-methionine + H(+) = S-adenosyl 3-(methylsulfanyl)propylamine + CO2. It functions in the pathway amine and polyamine biosynthesis; S-adenosylmethioninamine biosynthesis; S-adenosylmethioninamine from S-adenosyl-L-methionine: step 1/1. Functionally, catalyzes the decarboxylation of S-adenosylmethionine to S-adenosylmethioninamine (dcAdoMet), the propylamine donor required for the synthesis of the polyamines spermine and spermidine from the diamine putrescine. This chain is S-adenosylmethionine decarboxylase proenzyme, found in Desulfitobacterium hafniense (strain DSM 10664 / DCB-2).